A 286-amino-acid polypeptide reads, in one-letter code: MARQVICWCFTLNNPLSPLSLHELMKYLVYQREQGEAGNIHFQGYIEMKKRTSLAGMKKLIPGAHFEKRRGTQGEARAYAMKEDTRLEGPWEYGEFIPTIEDKLREVMNDMKITGKRPIEYIEECCNTYDKSASTLREFRGELKKKKAIISWELQRKPWMDEVDTLLQERDGRRIIWVYGPQGGEGKTSYAKHLVKTRDAFYSTGGKTADIAFAWDHQELVLFDFPRSFEEYVNYGVIEQLKNGIIQSGKYQSVIKYSDYVEVIVFANFTPRSGMFSDDRIVYVYA.

The CRESS-DNA virus Rep endonuclease domain maps to 2 to 96 (ARQVICWCFT…LEGPWEYGEF (95 aa)). The RCR-1 motif lies at 9–12 (CFTL). Residues E33 and H41 each coordinate a divalent metal cation. The short motif at 41–43 (HFQ) is the RCR-2 element. The short motif at 50 to 70 (KRTSLAGMKKLIPGAHFEKRR) is the Nuclear localization signal element. Y79 acts as the For DNA cleavage activity in catalysis. Residues 79-82 (YAMK) carry the RCR-3 motif. An a divalent metal cation-binding site is contributed by D84. A Nuclear localization signal motif is present at residues 96-102 (FIPTIED). 180–188 (GPQGGEGKT) lines the ATP pocket.

The protein belongs to the nanoviridea/circoviridae replication-associated protein family. In terms of assembly, homooligomer (Potential). Rep binds to repeated DNA motifs (iterons). Mg(2+) is required as a cofactor. Mn(2+) serves as cofactor.

It localises to the host nucleus. The enzyme catalyses ATP + H2O = ADP + phosphate + H(+). Its function is as follows. Essential for the replication of all genomic viral ssDNA (trans-replication). The closed circular ssDNA genome is first converted to a superhelical dsDNA. Rep binds a specific hairpin at the genome origin of replication. Introduces an endonucleolytic nick within the conserved sequence 5'-A[GT]TATTAC-3' in the intergenic region of the genome, thereby initiating the rolling circle replication (RCR). Following cleavage, binds covalently to the 5'-phosphate of DNA as a tyrosyl ester. The cleavage gives rise to a free 3'-OH that serves as a primer for the cellular DNA polymerase. The polymerase synthesizes the (+) strand DNA by rolling circle mechanism. After one round of replication, a Rep-catalyzed nucleotidyl transfer reaction releases a circular single-stranded virus genome, thereby terminating the replication. Displays origin-specific DNA cleavage, nucleotidyl transferase, ATPase and helicase activities. In Astragalus sinicus (Chinese milk vetch), this protein is Master replication protein (DNA-R).